The chain runs to 424 residues: MNQEDNTGGGGIFGLFKWTKXALFGTDISPSMKYKDQEERRDRSRYAQDDTNFSMKFGNDSNRRSTNLSRSNSWSGLDSTLHRKYELLPEYNENGFNSIVNGDHHSKERIRSLRSPAPIVPREPLRNEPTDTFGHRLHTKRRTINELSNSQIPFIPPQEDDPLLSKLFNKDGVNEVRRSPYKLSVKDIPGKFPSPLTKRDEIDNYYVRDEDACHKNREYKKAYFDLFAQMDLNSRDLEDLCEDVREQREQFHRNEQTYKQAYEEMRAELVNELKKSKTLFENYYSLGQKYKSLKKXLDQTISHEAELATSRERLYQEEDLKNFEIQTLKQRLSDLELKYTNLQIEKDMQRDNYESEIHDLLLQLSLRNNERKDTSAGSNIFSTGQYDRTPFHNGNNSYDSNSHSWDTDYLKKYRRIHRTLKQKS.

Residue S29 is modified to Phosphoserine. Positions 34–48 are enriched in basic and acidic residues; it reads YKDQEERRDRSRYAQ. Positions 34 to 76 are disordered; it reads YKDQEERRDRSRYAQDDTNFSMKFGNDSNRRSTNLSRSNSWSG. Residues 64–75 are compositionally biased toward low complexity; sequence RSTNLSRSNSWS. Phosphoserine is present on residues S73 and S115. Residues 229–355 adopt a coiled-coil conformation; the sequence is QMDLNSRDLE…KDMQRDNYES (127 aa).

It belongs to the BBP1 family. In terms of assembly, homodimer. Interacts with KAR1, MPS2 and SPC29.

It localises to the cytoplasm. It is found in the cytoskeleton. The protein resides in the microtubule organizing center. The protein localises to the spindle pole body. In terms of biological role, component of the spindle pole body (SPB) required for insertion of the nascent SPB into the nuclear envelope and for the proper execution of spindle pole body (SPB) duplication. Connects the central plaque of the SPB with the half-bridge. Required for proper localization of CDC5 at the SPB and for proper M-phase progression. This Saccharomyces cerevisiae (strain FostersO) (Baker's yeast) protein is Spindle pole component BBP1 (BBP1).